Consider the following 307-residue polypeptide: 3-ketodihydrosphingosine reductase TSC10 (307 aa).

An NADP(+)-binding site is contributed by Leu11. Residues Gly14, Ser16, and Gly18 each coordinate NADPH. Positions 14-18 (GGSQG) match the GXSXG motif. NADP(+) is bound at residue Leu19. NADPH is bound by residues Arg40, Lys44, and Leu74. The active-site Proton donor is the Ser147. NADP(+) is bound by residues Tyr161, Lys165, and Ser194. The active-site Proton acceptor is the Tyr161. The active-site Lowers pKa of active site Tyr is Lys165. The chain crosses the membrane as a helical span at residues 261-281 (YFLWPLGWLLGALVNLLVVPI).

It belongs to the short-chain dehydrogenases/reductases (SDR) family.

It localises to the endoplasmic reticulum membrane. It carries out the reaction sphinganine + NADP(+) = 3-oxosphinganine + NADPH + H(+). Its pathway is lipid metabolism; sphingolipid metabolism. In terms of biological role, catalyzes the reduction of 3'-oxosphinganine (3-ketodihydrosphingosine/KDS) to sphinganine (dihydrosphingosine/DHS), the second step of de novo sphingolipid biosynthesis. This is 3-ketodihydrosphingosine reductase TSC10 (TSC10) from Eremothecium gossypii (strain ATCC 10895 / CBS 109.51 / FGSC 9923 / NRRL Y-1056) (Yeast).